The primary structure comprises 671 residues: MSRDDVQRWKDKYLENIEQQERLQRRWDARIDLLRRGLVRSSLAAEGSDKAVDQCMKELREILRRDDMDAGLSGLIPRLEKAVLDSEQRRQQRTQQNIDALGELAQQLLALDLPRELRKPLKQFARDIEERARQSREIPILLSELSRLQRQALAERKGGDAEDGRPSLLQRLFGGKESETTAEPSASVPSVVAASNTPIQPAAAAPSLPVAEHDEAPGGPPQPLPARTVAAIESAPAGWVGVAERGEPNQILLDEPREIWLDSLPLPAGLSFSETLEEAGAEPSPAMPADVESAPEAPATPVDNLDGQAVDEAYELPPPIPEPGYSAVAPHIEASLLRLLDGLSLPSSHQPQAEALRERIDGSLNWYELVPVLDDLAVLVLSLADSGQRDFEEYLRQLNERLESFLGHLGDAHAGYTDVLDNARGFDQSLREQVSGLQASVQQATDLNSLKLAVDSRLNGLLASMDEHQREQAEHEQEVSGRLQALMERVNSMEQDAKAFHSHLEDQRQKALTDPLTGLPNRAALSERLEQEVARRHRDGGDLLLAVLDIDHFKRINDDFGHLAGDKVLKIIAGELRKRLRQADFIARFGGEEFVVLLPATSLEAGRQLLERLRAAIAACPFHFKGEPLSITCSAGITAFEGNEAGEAVFERADQALYRAKRAGRDRLEVA.

2 disordered regions span residues 204–223 (AAPS…PPQP) and 278–298 (EAGA…PEAP). Asp-549 provides a ligand contact to Mg(2+). 3 residues coordinate substrate: Asn-557, His-562, and Asp-566. Glu-592 lines the Mg(2+) pocket. Residue Glu-592 is part of the active site.

In terms of assembly, homodimer. Requires Mg(2+) as cofactor.

Its subcellular location is the cell inner membrane. It catalyses the reaction 2 GTP = 3',3'-c-di-GMP + 2 diphosphate. Its pathway is purine metabolism; 3',5'-cyclic di-GMP biosynthesis. Functionally, catalyzes the synthesis of cyclic-di-GMP (c-di-GMP) via the condensation of 2 GTP molecules. Cyclic-di-GMP is a second messenger which controls cell surface-associated traits in bacteria. Localizes at the cell poles through interaction with FimV where it increases the local pools of c-di-GMP. This is Diguanylate cyclase DgcP (dgcP) from Pseudomonas aeruginosa (strain ATCC 15692 / DSM 22644 / CIP 104116 / JCM 14847 / LMG 12228 / 1C / PRS 101 / PAO1).